A 205-amino-acid polypeptide reads, in one-letter code: Ras-related protein rab-6.1 (205 aa).

Residues 18 to 25 (GEQSVGKT), Thr-43, 66 to 70 (DTAGQ), and 124 to 127 (NKTD) each bind GTP. S-geranylgeranyl cysteine attachment occurs at residues Cys-203 and Cys-205. Cys-205 is modified (cysteine methyl ester).

The protein belongs to the small GTPase superfamily. Rab family. In terms of assembly, interacts with GARP complex component vps-52. As to expression, highly expressed in body wall muscle, intestine, somatic gonad, distal tip cells, vulva, and neurons including AVB, AVD, RIG, and PVC (at protein level). Not expressed in AVA and RMDV neurons.

It is found in the cell membrane. The protein resides in the cell projection. It localises to the dendrite. The protein localises to the perikaryon. Its subcellular location is the golgi apparatus. It is found in the cytoplasmic vesicle. The protein resides in the secretory vesicle. Functionally, the small GTPases Rab are key regulators of intracellular membrane trafficking, from the formation of transport vesicles to their fusion with membranes. Rabs cycle between an inactive GDP-bound form and an active GTP-bound form that is able to recruit to membranes different set of downstream effectors directly responsible for vesicle formation, movement, tethering and fusion. In its active GTP-bound form, acts redundantly with rab-6.2 (in its active GTP-bound form) to positively regulate the retrograde trafficking of cargo molecules from endosomes to Golgi structures. Required for the retrograde trafficking of glr-1, a subunit of AMPA-type glutamate receptors (AMPRs), out of early endosomes and into the Golgi compartment in neurons. Together with rab-6.2, promotes the retrograde trafficking of mig-14 from endosomes to Golgi structures in the intestine. In oocytes, in its active GTP-bound form, involved in the membrane fusion and exocytosis of secretory vesicles (cortical granules) to play a role in the remodeling of the embryo surface following fertilization. Recruits sep-1 to cortical granules (derived from the Golgi complex) for exocytosis during the oocyte-to-embryo transition. Required for seam cell division and alae formation. Promotes spontaneous reversals in locomotion. This Caenorhabditis elegans protein is Ras-related protein rab-6.1.